The chain runs to 446 residues: CBL-interacting serine/threonine-protein kinase 24 (446 aa).

The 254-residue stretch at 11–264 (YEVGRTIGEG…IQGIKKDPWF (254 aa)) folds into the Protein kinase domain. ATP is bound by residues 17 to 25 (IGEGTFAKV) and Lys40. Asp134 functions as the Proton acceptor in the catalytic mechanism. An activation loop region spans residues 152–179 (DFGLSALPQEGVELLRTTCGTPNYVAPE). Ser156 carries the phosphoserine modification. Thr168 is subject to Phosphothreonine. The NAF domain occupies 305 to 329 (EGPLMMNAFEMITLSQGLNLSALFD). The tract at residues 336–365 (KRQTRFVSRREPSEIIANIEAVANSMGFKS) is PPI.

The protein belongs to the protein kinase superfamily. CAMK Ser/Thr protein kinase family. SNF1 subfamily. As to quaternary structure, interacts with CBL1, CBL2, CBL4/SOS3, CBL5, CBL9, CBL10 and with the protein phosphatase 2C ABI2. Mn(2+) serves as cofactor. Post-translationally, autophosphorylated.

It is found in the cytoplasm. The protein resides in the nucleus. The catalysed reaction is L-seryl-[protein] + ATP = O-phospho-L-seryl-[protein] + ADP + H(+). It catalyses the reaction L-threonyl-[protein] + ATP = O-phospho-L-threonyl-[protein] + ADP + H(+). Functionally, involved in the regulatory pathway for the control of intracellular Na(+) and K(+) homeostasis and salt tolerance. Activates the vacuolar H(+)/Ca(2+) antiporter CAX1 and operates in synergy with CBL4/SOS3 to activate the plasma membrane Na(+)/H(+) antiporter SOS1. CIPK serine-threonine protein kinases interact with CBL proteins. Binding of a CBL protein to the regulatory NAF domain of CIPK protein lead to the activation of the kinase in a calcium-dependent manner. Phosphorylates CBL1, CBL4 and CBL10. The protein is CBL-interacting serine/threonine-protein kinase 24 (CIPK24) of Arabidopsis thaliana (Mouse-ear cress).